The primary structure comprises 484 residues: Putative amidase AmiA2 (484 aa).

Active-site charge relay system residues include Lys-93 and Ser-167. Ser-191 acts as the Acyl-ester intermediate in catalysis.

This sequence belongs to the amidase family.

It catalyses the reaction a monocarboxylic acid amide + H2O = a monocarboxylate + NH4(+). The polypeptide is Putative amidase AmiA2 (amiA2) (Mycobacterium bovis (strain ATCC BAA-935 / AF2122/97)).